The chain runs to 178 residues: Glucagon-2 (178 aa).

Residues 1–21 form the signal peptide; it reads MFGIHSLAGVLLLVIVQSQLA. 3 propeptides span residues 83-87, 123-134, and 171-178; these read SGAPS, ESAEESMNGPMS, and SNKRQEDH.

This sequence belongs to the glucagon family.

It is found in the secreted. In terms of biological role, promotes hydrolysis of glycogen and lipids, and raises the blood sugar level. The protein is Glucagon-2 (gcg2) of Oncorhynchus mykiss (Rainbow trout).